The chain runs to 208 residues: Thymidylate kinase (208 aa).

Position 10–17 (glycine 10–threonine 17) interacts with ATP.

It belongs to the thymidylate kinase family.

The enzyme catalyses dTMP + ATP = dTDP + ADP. In terms of biological role, phosphorylation of dTMP to form dTDP in both de novo and salvage pathways of dTTP synthesis. In Bacillus cereus (strain 03BB102), this protein is Thymidylate kinase.